The chain runs to 668 residues: Protein brown (668 aa).

At 1–412 (MPMDEGDAQG…TEDLANIRSG (412 aa)) the chain is on the cytoplasmic side. The region spanning 31–328 (YSFWNECRKQ…FTEGFMQPKN (298 aa)) is the ABC transporter domain. 63–70 (GGSGAGKT) serves as a coordination point for ATP. Residues 413–433 (LIGFGFFMTTAVTLSLMYSGV) form a helical membrane-spanning segment. Residues 434–453 (GGLTQRTVQDVGGSIFMLSN) are Extracellular-facing. Residues 454-474 (EMIFTFSYGVTYIFPAALPII) form a helical membrane-spanning segment. At 475–490 (RREVAEGTYSLSAYYV) the chain is on the cytoplasmic side. A helical membrane pass occupies residues 491–511 (ALVLSFVPVAFFKGYMFLSVI). Topologically, residues 512–524 (YASIYYTRGFLLY) are extracellular. The helical transmembrane segment at 525-545 (ITMGFLMSLSAIAAVGYGVFL) threads the bilayer. Residues 546-561 (SSLFETDKMASECAAP) lie on the Cytoplasmic side of the membrane. A helical membrane pass occupies residues 562-582 (FDLIFLIFGGTYMNVDSVPLL). Over 583–637 (KYFSLFFYSNEALMYNFWIDIDNIACXVNDEHPCCQTGLEVLQQASFRTADYTFW) the chain is Extracellular. Residues 638 to 658 (LDCASLLVVALVFHIVSFTLI) form a helical membrane-spanning segment. At 659–668 (RRYINRSGYY) the chain is on the cytoplasmic side.

Belongs to the ABC transporter superfamily. ABCG family. Eye pigment precursor importer (TC 3.A.1.204) subfamily. In terms of assembly, may form a heterodimer with w/white. Expressed in eyes.

It localises to the membrane. The enzyme catalyses guanine(out) + ATP + H2O = guanine(in) + ADP + phosphate + H(+). It carries out the reaction riboflavin(in) + ATP + H2O = riboflavin(out) + ADP + phosphate + H(+). The catalysed reaction is (6S)-5,6,7,8-tetrahydrofolate(out) + ATP + H2O = (6S)-5,6,7,8-tetrahydrofolate(in) + ADP + phosphate + H(+). Functionally, ATP-dependent transporter of the ATP-binding cassette (ABC) family which transports various molecules including bioamines, neurotransmitters and metabolic intermediates. In the eye and probably in association with w/white, required for the transport of the eye red pigment precursor, guanine, into pigment cell granules. In Malpighian tubules, involved in guanine uptake. Probably in association with w/white, involved in aging-induced intestinal stem cell proliferation in the midgut by regulating tetrahydrofolate transport. This Drosophila virilis (Fruit fly) protein is Protein brown.